The following is a 347-amino-acid chain: DNA primase small subunit PriS (347 aa).

Active-site residues include aspartate 95 and aspartate 97. Zn(2+)-binding residues include cysteine 106, histidine 108, cysteine 114, and cysteine 117. The short motif at 106-117 (CNHEPGTVCPIC) is the Zinc knuckle motif element. The active site involves aspartate 280.

Belongs to the eukaryotic-type primase small subunit family. As to quaternary structure, heterodimer of a small subunit (PriS) and a large subunit (PriL). Both participate in formation of the active center, but the ATP-binding site is exclusively located on the small subunit. Mg(2+) serves as cofactor. It depends on Mn(2+) as a cofactor.

Functionally, catalytic subunit of DNA primase, an RNA polymerase that catalyzes the synthesis of short RNA molecules used as primers for DNA polymerase during DNA replication. The small subunit contains the primase catalytic core and has DNA synthesis activity on its own. Binding to the large subunit stabilizes and modulates the activity, increasing the rate of DNA synthesis while decreasing the length of the DNA fragments, and conferring RNA synthesis capability. The DNA polymerase activity may enable DNA primase to also catalyze primer extension after primer synthesis. May also play a role in DNA repair. This chain is DNA primase small subunit PriS, found in Pyrococcus furiosus (strain ATCC 43587 / DSM 3638 / JCM 8422 / Vc1).